The sequence spans 259 residues: Archaerhodopsin-2 (259 aa).

Positions 1–6 are excised as a propeptide; sequence MDPIAL. Gln-7 carries the post-translational modification Pyrrolidone carboxylic acid. Residues 7–18 lie on the Extracellular side of the membrane; it reads QAGFDLLNDGRP. Residues 19 to 40 form a helical membrane-spanning segment; that stretch reads ETLWLGIGTLLMLIGTFYFIAR. The Cytoplasmic segment spans residues 41 to 49; the sequence is GWGVTDKEA. The helical transmembrane segment at 50 to 71 threads the bilayer; it reads REYYAITILVPGIASAAYLAMF. Topologically, residues 72 to 90 are extracellular; sequence FGIGVTEVELASGTVLDIY. Residues 91 to 112 form a helical membrane-spanning segment; it reads YARYADWLFTTPLLLLDLALLA. Over 113-115 the chain is Cytoplasmic; the sequence is KVD. Residues 116-138 traverse the membrane as a helical segment; it reads RVTIGTLIGVDALMIVTGLIGAL. Topologically, residues 139 to 142 are extracellular; it reads SKTP. The chain crosses the membrane as a helical span at residues 143–171; the sequence is LARYTWWLFSTIAFLFVLYYLLTSLRSAA. Over 172 to 174 the chain is Cytoplasmic; that stretch reads AKR. A helical membrane pass occupies residues 175–203; that stretch reads SEEVRSTFNTLTALVAVLWTAYPILWIVG. Over 204 to 211 the chain is Extracellular; that stretch reads TEGAGVVG. The chain crosses the membrane as a helical span at residues 212-244; it reads LGIETLAFMVLDVTAKVGFGFVLLRSRAILGET. Position 227 is an N6-(retinylidene)lysine (Lys-227). Over 245-259 the chain is Cytoplasmic; sequence EAPEPSAGADASAAD.

It belongs to the archaeal/bacterial/fungal opsin family.

The protein resides in the cell membrane. In terms of biological role, light-driven proton pump. It may interact with bacterioruberin in the claret membrane. This Halobacterium sp. (strain aus-2) protein is Archaerhodopsin-2.